The primary structure comprises 202 residues: 3-isopropylmalate dehydratase small subunit 1 (202 aa).

It belongs to the LeuD family. LeuD type 1 subfamily. Heterodimer of LeuC and LeuD.

It carries out the reaction (2R,3S)-3-isopropylmalate = (2S)-2-isopropylmalate. The protein operates within amino-acid biosynthesis; L-leucine biosynthesis; L-leucine from 3-methyl-2-oxobutanoate: step 2/4. In terms of biological role, catalyzes the isomerization between 2-isopropylmalate and 3-isopropylmalate, via the formation of 2-isopropylmaleate. The sequence is that of 3-isopropylmalate dehydratase small subunit 1 from Mannheimia succiniciproducens (strain KCTC 0769BP / MBEL55E).